A 435-amino-acid chain; its full sequence is GTPase Der (435 aa).

EngA-type G domains lie at 4-167 (KIVA…SKND) and 175-350 (TKIA…QSLS). GTP contacts are provided by residues 10–17 (GRPNVGKS), 57–61 (DTGGI), 119–122 (NKYD), 181–188 (GRPNVGKS), 228–232 (DTAGI), and 293–296 (NKWD). The KH-like domain maps to 351-435 (VKVKTYVLNE…PINLIFRERK (85 aa)).

Belongs to the TRAFAC class TrmE-Era-EngA-EngB-Septin-like GTPase superfamily. EngA (Der) GTPase family. In terms of assembly, associates with the 50S ribosomal subunit.

Functionally, GTPase that plays an essential role in the late steps of ribosome biogenesis. The sequence is that of GTPase Der from Mycoplasma mycoides subsp. mycoides SC (strain CCUG 32753 / NCTC 10114 / PG1).